The following is a 329-amino-acid chain: DNA-directed RNA polymerase subunit alpha (329 aa).

The tract at residues 1–235 (MQGSVTEFLK…EQLDAFVDLR (235 aa)) is alpha N-terminal domain (alpha-NTD). Residues 249–329 (FDPILLRPVD…NWPPASIAED (81 aa)) are alpha C-terminal domain (alpha-CTD).

This sequence belongs to the RNA polymerase alpha chain family. As to quaternary structure, homodimer. The RNAP catalytic core consists of 2 alpha, 1 beta, 1 beta' and 1 omega subunit. When a sigma factor is associated with the core the holoenzyme is formed, which can initiate transcription.

The catalysed reaction is RNA(n) + a ribonucleoside 5'-triphosphate = RNA(n+1) + diphosphate. Functionally, DNA-dependent RNA polymerase catalyzes the transcription of DNA into RNA using the four ribonucleoside triphosphates as substrates. The protein is DNA-directed RNA polymerase subunit alpha of Histophilus somni (strain 129Pt) (Haemophilus somnus).